Here is a 661-residue protein sequence, read N- to C-terminus: Ecdysteroid-phosphate phosphatase (661 aa).

The UBA domain occupies 16–57 (KQDVSPLQILLQMGFRRQRALKALAATGNRSVQLASDWLLTH). In terms of domain architecture, SH3 spans 235–300 (ANHQVYKVTQ…PAVYTRRTAE (66 aa)). Arg409 is a catalytic residue. The active-site Tele-phosphohistidine intermediate is His410. His590 is a catalytic residue.

Homodimer. In terms of tissue distribution, detected in non-diapause eggs, with highest expression between 2 and 5 days after oviposition. Not detected in other tissues tested.

The protein localises to the cytoplasm. Its subcellular location is the cytosol. It carries out the reaction ecdysone 22-phosphate + H2O = ecdysone + phosphate. The enzyme catalyses 20-hydroxyecdysone 22-phosphate + H2O = 20-hydroxyecdysone + phosphate. It catalyses the reaction 2-deoxyecdysone 22-phosphate + H2O = 2-deoxyecdysone + phosphate. The catalysed reaction is O-phospho-L-tyrosyl-[protein] + H2O = L-tyrosyl-[protein] + phosphate. With respect to regulation, competitively inhibited by 4-nitrophenyl phosphate (para-nitrophenylphosphate, pNPP). Also inhibited by tungstate, vanadate, and phosphate. Functionally, steroid phosphatase which catalyzes the conversion of inactive phosphorylated ecdysteroids into their active forms. Shows high activity towards ecdysone 22-phosphate (E22P). Has lower activity towards other ecdysteriod phosphates including 20-hydroxyecdysone 22-phosphate (20E22P) and 2-deoxyecdysone 22-phosphate (2dE22P). Also has protein tyrosine phosphatase activity. In Bombyx mori (Silk moth), this protein is Ecdysteroid-phosphate phosphatase.